The following is a 77-amino-acid chain: Delta-conotoxin GmVIA (77 aa).

The first 22 residues, 1-22, serve as a signal peptide directing secretion; that stretch reads MKLTCMMIVAVLFLTAWTFVTA. The propeptide occupies 23 to 48; that stretch reads DDSGNGMEILFPKAGHEMENLEVSNR. 3 disulfides stabilise this stretch: Cys52/Cys67, Cys59/Cys72, and Cys66/Cys76.

The protein belongs to the conotoxin O1 superfamily. In terms of tissue distribution, expressed by the venom duct.

It is found in the secreted. Functionally, delta-conotoxins bind to site 6 of voltage-gated sodium channels (Nav) and inhibit the inactivation process. This toxin shows weak activity on rNav1.2/SCN2A (EC(50)=2.5 uM) and rNav1.4/SCN4A (EC(50)=4.8 uM). In vivo, injection of this peptide in the head region of garden snail induces retraction of the head and body into shell. This is followed by secretion of viscous green slime and a convulsive undulation into and out of the shell. No apparent biological activity was observed when a much greater dose of peptide was injected intraperitoneally into mice. The polypeptide is Delta-conotoxin GmVIA (Conus gloriamaris (Glory-of-the-Sea cone)).